Here is a 172-residue protein sequence, read N- to C-terminus: Mitochondrial import inner membrane translocase subunit Tim17-B (172 aa).

Cysteines 9 and 78 form a disulfide. The next 3 membrane-spanning stretches (helical) occupy residues 17–37 (CGGA…IKGF), 61–77 (QIGG…STID), and 113–133 (VGSA…GILL). Residues 146-172 (PFLEDPSQLPPKDGTPAPGYPSYQQYH) are disordered.

It belongs to the Tim17/Tim22/Tim23 family. In terms of assembly, component of the TIM23 complex at least composed of TIMM23, TIMM17 (TIMM17A or TIMM17B) and TIMM50. The complex interacts with the TIMM44 component of the PAM complex and with DNAJC15. In terms of processing, forms one disulfide bond. In terms of tissue distribution, expression is abundant in heart and skeletal muscle, intermediate in brain, and weak in pancreas, placenta, kidney and liver.

It localises to the mitochondrion inner membrane. Essential component of the TIM23 complex, a complex that mediates the translocation of transit peptide-containing proteins across the mitochondrial inner membrane. The sequence is that of Mitochondrial import inner membrane translocase subunit Tim17-B (TIMM17B) from Homo sapiens (Human).